The primary structure comprises 109 residues: Ribonuclease (109 aa).

The active-site Proton acceptor is Glu-72. His-101 (proton donor) is an active-site residue.

Belongs to the ribonuclease N1/T1 family.

It is found in the secreted. Functionally, hydrolyzes phosphodiester bonds in RNA, poly- and oligoribonucleotides resulting in 3'-nucleoside monophosphates via 2',3'-cyclophosphate intermediates. In Heyndrickxia coagulans (Weizmannia coagulans), this protein is Ribonuclease.